The primary structure comprises 602 residues: Zinc finger MYND domain-containing protein 11 (602 aa).

The 77-residue stretch at 6–82 (KRRQADTKAI…CKGSKAGIEQ (77 aa)) folds into the SAMD1-like winged helix (WH) domain. The PHD-type zinc-finger motif lies at 100–148 (DWYCFECHLPGEVLICDLCFRVYHSKCLSDEFRLRDSSSHWQCPVCRSI). In terms of domain architecture, Bromo spans 149–255 (KKKHSNKQEM…KDTCHELDEL (107 aa)). Zn(2+) contacts are provided by Cys258, Cys261, Cys277, and His281. Residues 280–331 (NHELVWAKMKGFGFWPAKVMQKEDNQVDVRFFGHHHQRAWIPSENIQDITVN) form the PWWP domain. An aromatic cage required for H3.3K36me3-specific binding region spans residues 291–310 (FGFWPAKVMQKEDNQVDVRF). A Glycyl lysine isopeptide (Lys-Gly) (interchain with G-Cter in SUMO2) cross-link involves residue Lys366. Residues 366–461 (KNEDRGEEEA…HRSTQTTSDG (96 aa)) form a disordered region. A Nuclear localization signal motif is present at residues 394-400 (RAKKGRR). Residues Lys407 and Lys408 each participate in a glycyl lysine isopeptide (Lys-Gly) (interchain with G-Cter in SUMO2) cross-link. Residue Ser421 is modified to Phosphoserine. The span at 435-461 (SVSTQTKKLSASSPRMLHRSTQTTSDG) shows a compositional bias: polar residues. Zn(2+)-binding residues include Cys563, Cys566, Cys574, Cys575, Cys581, Cys585, His594, and Cys598. An MYND-type zinc finger spans residues 563–598 (CYNCEEEAMYHCCWNTSYCSIKCQQEHWHAEHKRTC).

Homooligomer; forms homooligomers via its C-terminus. Interacts with histone H3.3 trimethylated at 'Lys-36' (H3.3K36me3). Interacts (via MYND-type zinc finger) with NCOR1. Interacts (via MYND-type zinc finger) with MGA protein (via PXLXP motif). Interacts (via MYND-type zinc finger) with EZH2. Interacts with EMSY and E2F6. Interacts with PIAS1 and UBE2I. Ubiquitinated, leading to proteasomal degradation. In terms of processing, sumoylated following its interaction with PIAS1 and UBE2I.

The protein resides in the nucleus. The protein localises to the chromosome. In terms of biological role, chromatin reader that specifically recognizes and binds histone H3.3 trimethylated at 'Lys-36' (H3.3K36me3) and regulates RNA polymerase II elongation. Does not bind other histone H3 subtypes (H3.1 or H3.2). Colocalizes with highly expressed genes and functions as a transcription corepressor by modulating RNA polymerase II at the elongation stage. Binds non-specifically to dsDNA. Acts as a tumor-suppressor by repressing a transcriptional program essential for tumor cell growth. In Mus musculus (Mouse), this protein is Zinc finger MYND domain-containing protein 11 (Zmynd11).